A 278-amino-acid chain; its full sequence is Large ribosomal subunit protein uL2 (278 aa).

Disordered regions lie at residues 1-58 and 225-278; these read MAIR…GGGH and VMNP…KNKR. The segment covering 37–58 has biased composition (basic residues); it reads LHGRGGRNAHGRITTRHKGGGH. Over residues 253–267 the composition is skewed to basic and acidic residues; the sequence is PEGRTRKNKASDKLI. Positions 268 to 278 are enriched in basic residues; the sequence is VRRRRTGKNKR.

It belongs to the universal ribosomal protein uL2 family. In terms of assembly, part of the 50S ribosomal subunit. Forms a bridge to the 30S subunit in the 70S ribosome.

In terms of biological role, one of the primary rRNA binding proteins. Required for association of the 30S and 50S subunits to form the 70S ribosome, for tRNA binding and peptide bond formation. It has been suggested to have peptidyltransferase activity; this is somewhat controversial. Makes several contacts with the 16S rRNA in the 70S ribosome. The protein is Large ribosomal subunit protein uL2 of Rhodococcus opacus (strain B4).